The following is a 244-amino-acid chain: Ribosomal RNA small subunit methyltransferase G (244 aa).

S-adenosyl-L-methionine-binding positions include Gly-84, Phe-89, 107 to 109 (DST), 135 to 136 (AE), and Arg-154.

Belongs to the methyltransferase superfamily. RNA methyltransferase RsmG family.

It is found in the cytoplasm. Functionally, specifically methylates the N7 position of a guanine in 16S rRNA. This Nostoc punctiforme (strain ATCC 29133 / PCC 73102) protein is Ribosomal RNA small subunit methyltransferase G.